We begin with the raw amino-acid sequence, 236 residues long: UPF0257 lipoprotein YnfC (236 aa).

Residues 1 to 16 (MKYKLLPCLLAIFLTG) form the signal peptide. Cys-17 is lipidated: N-palmitoyl cysteine. Cys-17 carries the S-diacylglycerol cysteine lipid modification.

It belongs to the UPF0257 family.

It localises to the cell membrane. This Escherichia coli O17:K52:H18 (strain UMN026 / ExPEC) protein is UPF0257 lipoprotein YnfC.